The chain runs to 304 residues: CBY1-interacting BAR domain-containing protein 2 (304 aa).

Residues 6 to 217 (SRDSQVRVME…EKYDLERDLL (212 aa)) are BAR-like.

It belongs to the CIBAR family. In terms of assembly, homodimer (via BAR-like domain). Heterodimer (via BAR-like domain) with FAM92A. Interacts with CBY1. Restricted to certain tissues, most prominently expressed in multicilaited tissues.

Its subcellular location is the cytoplasm. It localises to the cytoskeleton. The protein localises to the microtubule organizing center. The protein resides in the centrosome. It is found in the centriole. Its subcellular location is the cilium basal body. May play a role in ciliogenesis. In cooperation with CBY1 may facilitate ciliogenesis likely by the recruitment and fusion of endosomal vesicles at distal appendages during early stages of ciliogenesis. This chain is CBY1-interacting BAR domain-containing protein 2, found in Homo sapiens (Human).